A 492-amino-acid polypeptide reads, in one-letter code: Bifunctional purine biosynthesis protein PurH (492 aa).

Positions 1–144 (MKKAILSVSN…KNYKHVTTIV (144 aa)) constitute an MGS-like domain.

It belongs to the PurH family.

It catalyses the reaction (6R)-10-formyltetrahydrofolate + 5-amino-1-(5-phospho-beta-D-ribosyl)imidazole-4-carboxamide = 5-formamido-1-(5-phospho-D-ribosyl)imidazole-4-carboxamide + (6S)-5,6,7,8-tetrahydrofolate. The catalysed reaction is IMP + H2O = 5-formamido-1-(5-phospho-D-ribosyl)imidazole-4-carboxamide. Its pathway is purine metabolism; IMP biosynthesis via de novo pathway; 5-formamido-1-(5-phospho-D-ribosyl)imidazole-4-carboxamide from 5-amino-1-(5-phospho-D-ribosyl)imidazole-4-carboxamide (10-formyl THF route): step 1/1. It functions in the pathway purine metabolism; IMP biosynthesis via de novo pathway; IMP from 5-formamido-1-(5-phospho-D-ribosyl)imidazole-4-carboxamide: step 1/1. The polypeptide is Bifunctional purine biosynthesis protein PurH (Staphylococcus aureus (strain MSSA476)).